A 670-amino-acid polypeptide reads, in one-letter code: Leucine-rich repeat-containing protein 45 (670 aa).

LRR repeat units lie at residues 87–108 (TVKS…ALGK), 115–136 (SIRS…FSFF), 145–166 (FLQR…ELAM), 173–194 (SLQE…ALLN), and 201–223 (TLKK…VEQA). Residues 234–645 (LSETQNRTSV…ISRMKEEEAQ (412 aa)) are a coiled coil.

Homomer.

The protein localises to the cytoplasm. It localises to the cytoskeleton. The protein resides in the microtubule organizing center. It is found in the centrosome. In terms of biological role, component of the proteinaceous fiber-like linker between two centrioles, required for centrosome cohesion. The chain is Leucine-rich repeat-containing protein 45 (LRRC45) from Gallus gallus (Chicken).